A 294-amino-acid chain; its full sequence is uncharacterized protein (294 aa).

It belongs to the glycosyltransferase 2 family. WaaE/KdtX subfamily.

This is an uncharacterized protein from Rickettsia bellii (strain RML369-C).